A 3122-amino-acid chain; its full sequence is tRNA nuclease CdiA-2 (3122 aa).

The tract at residues 36-205 (RAGVVPAWLS…ATLTTGNPNF (170 aa)) is two-partner system transport domain (TPS). A helical membrane pass occupies residues 54 to 74 (VALAVLVAAGVVPIWVNAQVV). The segment at 256–1254 (VVAGSNQVDY…GGSVAIQASG (999 aa)) is FHA-1. Residues 492 to 512 (GMTLGGGSLSNQGGRANSQGP) form a disordered region. Residues 500–512 (LSNQGGRANSQGP) show a composition bias toward polar residues. The interval 1345-1635 (TRRVMQTSGN…SATAVNVLSN (291 aa)) is receptor binding domain (RBD). Positions 1790–1845 (TAGNIDLKNTQVFTNSGTVKADTTLALQGKQIDNAFGALQSGGLTSLDTTGNVDLT) are periplasmic FHA-1 repeat (pFR). The segment at 1947 to 2085 (SDTDLNSATG…TERHVYNSRE (139 aa)) is FHA-2. Disordered regions lie at residues 2002-2031 (TSTI…ALTG), 2151-2174 (TTSQ…MSGG), and 2325-2352 (IGVQ…GSSI). The pretoxin (PT) domain stretch occupies residues 2086–2825 (THSRSGVVSG…SAGAAMASNV (740 aa)). 2 stretches are compositionally biased toward low complexity: residues 2151-2170 (TTSQ…HSGL) and 2325-2341 (IGVQ…MQSS). The segment covering 2342 to 2352 (EDQTIQRGSSI) has biased composition (polar residues). The tract at residues 2821-3122 (MASNVELYNA…NITIIKPKGN (302 aa)) is C-terminal effector domain (CT), has tRNA nuclease activity. The ELYN C-terminal motif signature appears at 2826–2829 (ELYN). The interval 2948–3000 (GATDRTPPSNAILSNSNSDNNSTQGSQSGTVTKTPNPEATGSLSGKPTQIPPL) is disordered. The tract at residues 2948–3122 (GATDRTPPSN…NITIIKPKGN (175 aa)) is truncated CT domain, has tRNA nuclease activity, sufficient for interaction with CdiI-2. Polar residues predominate over residues 2953 to 2994 (TPPSNAILSNSNSDNNSTQGSQSGTVTKTPNPEATGSLSGKP). A has tRNase activity region spans residues 2987–3122 (TGSLSGKPTQ…NITIIKPKGN (136 aa)). Active-site residues include E3012, D3039, D3048, and K3067.

It in the N-terminal section; belongs to the CdiA toxin family. Interacts with cognate immunity protein CdiI, which blocks its tRNA nuclease activity. The truncated CT fragment (residues 2948-3122) specifically interacts with cognate CdiI which inhibits the tRNA nuclease activity. The truncated CT is more stable in vitro than the original CT fragment characterized in E.coli.

The protein localises to the membrane. The protein resides in the secreted. It is found in the target cell. Its subcellular location is the target cell cytoplasm. Toxic component of a toxin-immunity protein module, which functions as a cellular contact-dependent growth inhibition (CDI) system. CDI modules allow bacteria to communicate with and inhibit the growth of closely related neighboring bacteria in a contact-dependent fashion. The C-terminal 301 residues (the CT fragment) cleaves near the C-terminus of E.coli tRNA1B(Ala), probably preventing tRNA charging, and inhibits growth in E.coli. A truncated CT fragment (residues 2948-3122) has tRNA endonuclease activity on several B.thailandensis tRNAs as well as tRNA2(Arg) where it cleaves after A-70 and U-71. Inactive CT domain binds tRNA, probably in a 1:1 complex. Toxic activity is neutralized by coexpression of the cognate immunity protein CdiI in E.coli, but not by non-cognate immunity proteins from other strains of B.pseudomallei. May use lipopolysaccharide as its target cell receptor. Probably gains access to the cytoplasm of target cells (B.thailandensis strain E264) by using integral inner membrane protein BTH_II0599. Protein BTH_I0359 is also implicated in an unknown fashion in CDI in B.thailandensis strain E264. Its function is as follows. Expression of this cdiAIB locus in B.thailandensis confers protection against other bacteria carrying the locus; growth inhibition requires cellular contact. Functionally, the CdiA protein is thought to be exported from the cell through the central lumen of CdiB, the other half of its two-partner system (TPS). The TPS domain probably remains associated with CdiB while the FHA-1 domain forms an extended filament with the receptor-binding domain (RBD) at its extremity; in the secretion arrested state the C-terminus of the RBD domain form a hairpin-like structure as the FHA-2, PT and CT domains are periplasmic. Upon binding to a target cell outer membrane receptor (possibly a lipoprotein in this CDI) a signal is transmitted to activate secretion. The filament elongates slightly, the rest of CdiA is secreted and the FHA-2 domain becomes stably associated with the target cell's outer membrane where it facilitates entry of the toxic CT domain into the target cell periplasm. From there the toxic CT domain is cleaved and gains access to the target cell cytoplasm via an inner membrane protein (probably inner membrane protein BTH_II0599). This is tRNA nuclease CdiA-2 (cdiA2) from Burkholderia pseudomallei (strain 1026b).